The chain runs to 210 residues: Chloramphenicol acetyltransferase (210 aa).

Residue His79 is part of the active site.

It belongs to the transferase hexapeptide repeat family.

The catalysed reaction is chloramphenicol + acetyl-CoA = chloramphenicol 3-acetate + CoA. This enzyme is an effector of chloramphenicol resistance in bacteria. This Morganella morganii (Proteus morganii) protein is Chloramphenicol acetyltransferase (cat).